Consider the following 173-residue polypeptide: ATP synthase subunit b (173 aa).

Residues 12 to 32 (LDVNPGLVVWTLITFLVVVLV) traverse the membrane as a helical segment.

Belongs to the ATPase B chain family. As to quaternary structure, F-type ATPases have 2 components, F(1) - the catalytic core - and F(0) - the membrane proton channel. F(1) has five subunits: alpha(3), beta(3), gamma(1), delta(1), epsilon(1). F(0) has three main subunits: a(1), b(2) and c(10-14). The alpha and beta chains form an alternating ring which encloses part of the gamma chain. F(1) is attached to F(0) by a central stalk formed by the gamma and epsilon chains, while a peripheral stalk is formed by the delta and b chains.

The protein localises to the cell inner membrane. F(1)F(0) ATP synthase produces ATP from ADP in the presence of a proton or sodium gradient. F-type ATPases consist of two structural domains, F(1) containing the extramembraneous catalytic core and F(0) containing the membrane proton channel, linked together by a central stalk and a peripheral stalk. During catalysis, ATP synthesis in the catalytic domain of F(1) is coupled via a rotary mechanism of the central stalk subunits to proton translocation. Its function is as follows. Component of the F(0) channel, it forms part of the peripheral stalk, linking F(1) to F(0). This Leptospira borgpetersenii serovar Hardjo-bovis (strain JB197) protein is ATP synthase subunit b.